Reading from the N-terminus, the 122-residue chain is Large ribosomal subunit protein bL12 (122 aa).

It belongs to the bacterial ribosomal protein bL12 family. Homodimer. Part of the ribosomal stalk of the 50S ribosomal subunit. Forms a multimeric L10(L12)X complex, where L10 forms an elongated spine to which 2 to 4 L12 dimers bind in a sequential fashion. Binds GTP-bound translation factors.

Its function is as follows. Forms part of the ribosomal stalk which helps the ribosome interact with GTP-bound translation factors. Is thus essential for accurate translation. This Azotobacter vinelandii (strain DJ / ATCC BAA-1303) protein is Large ribosomal subunit protein bL12.